The sequence spans 445 residues: MTKKRIAIIGAGPSGLAQLRAFQSAAAKGAEIPEIVCFEKQDNWGGLWNYTWRTGLDQYGEPVHGSMYRYLWSNGPKEGLEFADYSFEEHFGKQIASYPPRAVLFDYIEGRVLKAGVRNLIRFSTAVRWVEKAGDKFNVTVCHLPEDRTYTEEFDHVIVCSGHFSTPNVPYFPGFENFKGRVLHAHDFRDALEFKDKDILIVGTSYSAEDIGSQCWKYGCKSVTVSHRTAPMGFNWPDNWQEVPLLQKVEGNTAYFKDGTTKDVDAVILCTGYKHHFPFLPDDLRLKTANRLATADLYKGVAFVREPALFYLGMQDQWFTFNMFDAQAWWVRDVIMGRIALPDQATMEADVIDRVTREDAGEDDYAAIWYQGDYVKELIDETDYPSFDVEGACKAFKEWKGHKKKDIMGFRNNAYKSVITGTMAPMHHTPWKDALDDSLEVYLQN.

Residues S14, E39, Q41, L47, W48, and H64 each coordinate FAD. Residues W72 and N74 each coordinate NADP(+). Residues N74 and V127 each contribute to the FAD site. Positions 204, 205, 207, and 228 each coordinate NADP(+). Residues Q317 and T320 each coordinate FAD. R411 is a binding site for NADP(+).

This sequence belongs to the FMO family. FAD is required as a cofactor.

It catalyses the reaction trimethylamine + NADPH + O2 = trimethylamine N-oxide + NADP(+) + H2O. Functionally, catalyzes the oxidation of trimethylamine (TMA) to produce trimethylamine N-oxide (TMAO). In vitro, has a broad substrate specificity, oxidizing many nitrogen- and sulfur-containing compounds, including dimethylamine (DMA), dimethylsulfide (DMS) and dimethylsulfoxide (DMSO). This Roseovarius sp. (strain 217) protein is Trimethylamine monooxygenase.